The following is a 127-amino-acid chain: Large ribosomal subunit protein eL32 (127 aa).

Basic and acidic residues predominate over residues 38–48 (WRRPKGIDSKM). The tract at residues 38 to 66 (WRRPKGIDSKMRLKKKGKPRSPSIGWSSP) is disordered.

Belongs to the eukaryotic ribosomal protein eL32 family.

The polypeptide is Large ribosomal subunit protein eL32 (Thermococcus gammatolerans (strain DSM 15229 / JCM 11827 / EJ3)).